The chain runs to 438 residues: Na(+)/H(+) antiporter NhaA (438 aa).

Transmembrane regions (helical) follow at residues 23 to 43, 62 to 82, 104 to 124, 133 to 153, 162 to 182, 185 to 205, 212 to 232, 302 to 322, 337 to 357, 372 to 392, and 410 to 430; these read FGGIFLFLNAVLAMVVANSFL, FFIGFSLHNWIDDVLMALFFL, SFPVIAAIGGMIAPGLIYFFL, GFGIPMATDIAFALGVIMLLG, VFLITLAVADDLGAIVVIALF, TNLKFAWLLGALGVVLVLAIL, SLIPYLLLGVLLWFCVHQSGI, FLAPISGYFIMPLFAFANAGV, LGVILGLCLGKPLGIFLITFI, WWHILGAGLLAGIGFTMSMFI, and IAILLGSLISGIIGALYLFAL.

Belongs to the NhaA Na(+)/H(+) (TC 2.A.33) antiporter family.

The protein resides in the cell inner membrane. The enzyme catalyses Na(+)(in) + 2 H(+)(out) = Na(+)(out) + 2 H(+)(in). Functionally, na(+)/H(+) antiporter that extrudes sodium in exchange for external protons. The sequence is that of Na(+)/H(+) antiporter NhaA from Helicobacter pylori (strain J99 / ATCC 700824) (Campylobacter pylori J99).